Here is a 142-residue protein sequence, read N- to C-terminus: Large ribosomal subunit protein uL11 (142 aa).

This sequence belongs to the universal ribosomal protein uL11 family. As to quaternary structure, part of the ribosomal stalk of the 50S ribosomal subunit. Interacts with L10 and the large rRNA to form the base of the stalk. L10 forms an elongated spine to which L12 dimers bind in a sequential fashion forming a multimeric L10(L12)X complex. Post-translationally, one or more lysine residues are methylated.

In terms of biological role, forms part of the ribosomal stalk which helps the ribosome interact with GTP-bound translation factors. This chain is Large ribosomal subunit protein uL11, found in Sinorhizobium fredii (strain NBRC 101917 / NGR234).